Consider the following 319-residue polypeptide: Acetyl-coenzyme A carboxylase carboxyl transferase subunit alpha (319 aa).

Positions 39–293 (RLQKKSNDLT…KAVLEKQLHE (255 aa)) constitute a CoA carboxyltransferase C-terminal domain.

Belongs to the AccA family. In terms of assembly, acetyl-CoA carboxylase is a heterohexamer composed of biotin carboxyl carrier protein (AccB), biotin carboxylase (AccC) and two subunits each of ACCase subunit alpha (AccA) and ACCase subunit beta (AccD).

The protein localises to the cytoplasm. It catalyses the reaction N(6)-carboxybiotinyl-L-lysyl-[protein] + acetyl-CoA = N(6)-biotinyl-L-lysyl-[protein] + malonyl-CoA. It functions in the pathway lipid metabolism; malonyl-CoA biosynthesis; malonyl-CoA from acetyl-CoA: step 1/1. Component of the acetyl coenzyme A carboxylase (ACC) complex. First, biotin carboxylase catalyzes the carboxylation of biotin on its carrier protein (BCCP) and then the CO(2) group is transferred by the carboxyltransferase to acetyl-CoA to form malonyl-CoA. The chain is Acetyl-coenzyme A carboxylase carboxyl transferase subunit alpha from Neisseria meningitidis serogroup A / serotype 4A (strain DSM 15465 / Z2491).